The sequence spans 280 residues: Threonylcarbamoyl-AMP synthase (280 aa).

The N-terminal 56 residues, 1 to 56 (MSTARPCAGLRAAVAAGMGLSDGPAGSSRGCRLLRPPAPAPALPGARLLRLPESEA), are a transit peptide targeting the mitochondrion. Phosphoserine is present on Ser-61. The region spanning 68 to 258 (TEALRAAVAE…KFGIIRSGCA (191 aa)) is the YrdC-like domain.

It belongs to the SUA5 family. As to quaternary structure, interacts with RSC1A1.

The protein resides in the cytoplasm. It is found in the mitochondrion. It localises to the cell membrane. It catalyses the reaction L-threonine + hydrogencarbonate + ATP = L-threonylcarbamoyladenylate + diphosphate + H2O. Cytoplasmic and mitochondrial threonylcarbamoyl-AMP synthase required for the formation of a threonylcarbamoyl group on adenosine at position 37 (t(6)A37) in tRNAs that read codons beginning with adenine. Catalyzes the conversion of L-threonine, HCO(3)(-)/CO(2) and ATP to give threonylcarbamoyl-AMP (TC-AMP) as the acyladenylate intermediate, with the release of diphosphate. Participates in t(6)A37 formation in cytoplasmic and mitochondrial tRNAs. May regulate the activity of some transporters. The polypeptide is Threonylcarbamoyl-AMP synthase (Rattus norvegicus (Rat)).